The chain runs to 470 residues: Argininosuccinate lyase (470 aa).

This sequence belongs to the lyase 1 family. Argininosuccinate lyase subfamily.

It is found in the cytoplasm. It catalyses the reaction 2-(N(omega)-L-arginino)succinate = fumarate + L-arginine. The protein operates within amino-acid biosynthesis; L-arginine biosynthesis; L-arginine from L-ornithine and carbamoyl phosphate: step 3/3. The polypeptide is Argininosuccinate lyase (Synechococcus sp. (strain WH7803)).